The sequence spans 88 residues: Actobindin (88 aa).

At methionine 1 the chain carries N-acetylmethionine. The interval methionine 1 to aspartate 22 is disordered. Position 35 is an N6,N6,N6-trimethyllysine (lysine 35). The region spanning aspartate 37–alanine 54 is the WH2 domain. Lysine 72 bears the N6,N6,N6-trimethyllysine mark.

As to quaternary structure, monomer.

In terms of biological role, is able to bind two actin monomers at high concentrations of G-actin. This is Actobindin from Acanthamoeba castellanii (Amoeba).